The primary structure comprises 250 residues: UDP-2,3-diacylglucosamine hydrolase (250 aa).

Mn(2+)-binding residues include Asp-7, His-9, Asp-40, Asn-78, and His-113. 78-79 serves as a coordination point for substrate; the sequence is NR. 5 residues coordinate substrate: Asp-121, Ser-159, Thr-163, Lys-166, and His-194. Mn(2+) contacts are provided by His-194 and His-196.

Belongs to the LpxH family. The cofactor is Mn(2+).

It is found in the cell inner membrane. The catalysed reaction is UDP-2-N,3-O-bis[(3R)-3-hydroxytetradecanoyl]-alpha-D-glucosamine + H2O = 2-N,3-O-bis[(3R)-3-hydroxytetradecanoyl]-alpha-D-glucosaminyl 1-phosphate + UMP + 2 H(+). Its pathway is glycolipid biosynthesis; lipid IV(A) biosynthesis; lipid IV(A) from (3R)-3-hydroxytetradecanoyl-[acyl-carrier-protein] and UDP-N-acetyl-alpha-D-glucosamine: step 4/6. Its function is as follows. Hydrolyzes the pyrophosphate bond of UDP-2,3-diacylglucosamine to yield 2,3-diacylglucosamine 1-phosphate (lipid X) and UMP by catalyzing the attack of water at the alpha-P atom. Involved in the biosynthesis of lipid A, a phosphorylated glycolipid that anchors the lipopolysaccharide to the outer membrane of the cell. The polypeptide is UDP-2,3-diacylglucosamine hydrolase (Pseudomonas fluorescens (strain ATCC BAA-477 / NRRL B-23932 / Pf-5)).